The following is a 257-amino-acid chain: Type III pantothenate kinase (257 aa).

Residue 6 to 13 coordinates ATP; that stretch reads DSGNTNTV. 108 to 111 contacts substrate; the sequence is GADR. D110 (proton acceptor) is an active-site residue. Residue D130 participates in K(+) binding. T133 provides a ligand contact to ATP. A substrate-binding site is contributed by T185.

It belongs to the type III pantothenate kinase family. As to quaternary structure, homodimer. Requires NH4(+) as cofactor. The cofactor is K(+).

The protein resides in the cytoplasm. The catalysed reaction is (R)-pantothenate + ATP = (R)-4'-phosphopantothenate + ADP + H(+). It participates in cofactor biosynthesis; coenzyme A biosynthesis; CoA from (R)-pantothenate: step 1/5. Its function is as follows. Catalyzes the phosphorylation of pantothenate (Pan), the first step in CoA biosynthesis. The sequence is that of Type III pantothenate kinase from Rhodospirillum rubrum (strain ATCC 11170 / ATH 1.1.1 / DSM 467 / LMG 4362 / NCIMB 8255 / S1).